The primary structure comprises 416 residues: Queuine tRNA-ribosyltransferase accessory subunit 2 (416 aa).

Residues cysteine 350, cysteine 352, cysteine 355, and histidine 381 each coordinate Zn(2+).

This sequence belongs to the queuine tRNA-ribosyltransferase family. QTRT2 subfamily. Heterodimer of a catalytic subunit qtrt1 and an accessory subunit qtrt2. Zn(2+) is required as a cofactor.

Its subcellular location is the cytoplasm. It is found in the mitochondrion outer membrane. Non-catalytic subunit of the queuine tRNA-ribosyltransferase (TGT) that catalyzes the base-exchange of a guanine (G) residue with queuine (Q) at position 34 (anticodon wobble position) in tRNAs with GU(N) anticodons (tRNA-Asp, -Asn, -His and -Tyr), resulting in the hypermodified nucleoside queuosine (7-(((4,5-cis-dihydroxy-2-cyclopenten-1-yl)amino)methyl)-7-deazaguanosine). The chain is Queuine tRNA-ribosyltransferase accessory subunit 2 from Danio rerio (Zebrafish).